A 332-amino-acid chain; its full sequence is DNA packaging protein (332 aa).

The tract at residues 1–207 (MDKSLFYNPQ…SERRKTRFGR (207 aa)) is ATPase. Residue 24–31 (GARGIGKS) participates in ATP binding. The segment at 233–332 (KRSKDSKFVF…YELFRKMRIQ (100 aa)) is DNA-binding.

It belongs to the phi29likevirus gp16 family. In terms of assembly, homopentamer. Interacts with the packaging RNA (pRNA). Part of a DNA-gp3-gp16 complex.

It carries out the reaction ATP + H2O = ADP + phosphate + H(+). Its function is as follows. ATPase required for the genome encapsidation reaction. Part of the active packaging motor via the binding to the packaging RNA (pRNA), itself fixed to the head-tail connector at the unique portal vertex of the prohead. Binds and supercoils the pre-formed, unit-length DNA bound to gp3 to produce an initiation complex for DNA packaging. Provides the energy to actively pump the viral DNA into the prohead. Approximately one molecule of ATP is used in the packaging of 2 bp of viral DNA. ATP hydrolysis results in a conformational change that causes the arginine/lysine finger of one subunit to move into the active site of its neighbor, where it interacts with the negatively charged oxygens on the gamma-phosphate of ATP. After packaging, the ATPase and the pRNA are released from the prohead. This chain is DNA packaging protein (16), found in Bacillus phage phi29 (Bacteriophage phi-29).